The primary structure comprises 378 residues: Sterol 24-C-methyltransferase erg6 (378 aa).

This sequence belongs to the class I-like SAM-binding methyltransferase superfamily. Erg6/SMT family.

It is found in the nucleus. The protein resides in the endoplasmic reticulum. It carries out the reaction zymosterol + S-adenosyl-L-methionine = fecosterol + S-adenosyl-L-homocysteine + H(+). The enzyme catalyses lanosterol + S-adenosyl-L-methionine = eburicol + S-adenosyl-L-homocysteine + H(+). It participates in steroid metabolism; ergosterol biosynthesis. Sterol 24-C-methyltransferase; part of the third module of ergosterol biosynthesis pathway that includes by the late steps of the pathway. Erg6 catalyzes the methyl transfer from S-adenosyl-methionine to the C-24 of zymosterol to form fecosterol. The third module or late pathway involves the ergosterol synthesis itself through consecutive reactions that mainly occur in the endoplasmic reticulum (ER) membrane. Firstly, the squalene synthase erg9 catalyzes the condensation of 2 farnesyl pyrophosphate moieties to form squalene, which is the precursor of all steroids. Secondly, squalene is converted into lanosterol by the consecutive action of the squalene epoxidase erg1 and the lanosterol synthase erg7. The lanosterol 14-alpha-demethylase erg11/cyp1 catalyzes C14-demethylation of lanosterol to produce 4,4'-dimethyl cholesta-8,14,24-triene-3-beta-ol. In the next steps, a complex process involving various demethylation, reduction and desaturation reactions catalyzed by the C-14 reductase erg24 and the C-4 demethylation complex erg25-erg26-erg27 leads to the production of zymosterol. Erg28 likely functions in the C-4 demethylation complex reaction by tethering erg26 and Erg27 to the endoplasmic reticulum or to facilitate interaction between these proteins. Then, the sterol 24-C-methyltransferase erg6 catalyzes the methyl transfer from S-adenosyl-methionine to the C-24 of zymosterol to form fecosterol. The C-8 sterol isomerase erg2 catalyzes the reaction which results in unsaturation at C-7 in the B ring of sterols and thus converts fecosterol to episterol. The sterol-C5-desaturases erg31 and erg32 then catalyze the introduction of a C-5 double bond in the B ring to produce 5-dehydroepisterol. The C-22 sterol desaturase erg5 further converts 5-dehydroepisterol into ergosta-5,7,22,24(28)-tetraen-3beta-ol by forming the C-22(23) double bond in the sterol side chain. Finally, ergosta-5,7,22,24(28)-tetraen-3beta-ol is substrate of the C-24(28) sterol reductase erg4 to produce ergosterol. In the genus Schizosaccharomyces, a second route exists between lanosterol and fecosterol, via the methylation of lanosterol to eburicol by erg6, followed by C14-demethylation by erg11/cyp1 and C4-demethylation by the demethylation complex erg25-erg26-erg27. This is Sterol 24-C-methyltransferase erg6 from Schizosaccharomyces pombe (strain 972 / ATCC 24843) (Fission yeast).